A 237-amino-acid polypeptide reads, in one-letter code: Myb-related protein MYBAS1 (237 aa).

HTH myb-type domains follow at residues 5–57 and 58–112; these read REEM…VNYL and HPGL…RKKA. A DNA-binding region (H-T-H motif) is located at residues 33–57; the sequence is WDFVAKVSGLNRTGKSCRLRWVNYL. Residues 62 to 65 carry the Bipartite nuclear localization signal 1 motif; the sequence is KHGR. The segment at residues 85–108 is a DNA-binding region (H-T-H motif); it reads WSRIARRLPGRTDNEIKNYWRTHM. A Bipartite nuclear localization signal 2 motif is present at residues 109–117; the sequence is RKKAQERRG.

The protein localises to the nucleus. Its function is as follows. Transcription factor. The polypeptide is Myb-related protein MYBAS1 (MYBAS1) (Oryza sativa subsp. japonica (Rice)).